Reading from the N-terminus, the 106-residue chain is UPF0145 protein CLL_A2504 (106 aa).

This sequence belongs to the UPF0145 family.

This Clostridium botulinum (strain Eklund 17B / Type B) protein is UPF0145 protein CLL_A2504.